Here is a 189-residue protein sequence, read N- to C-terminus: Elongation factor P (189 aa).

It belongs to the elongation factor P family.

Its subcellular location is the cytoplasm. The protein operates within protein biosynthesis; polypeptide chain elongation. Functionally, involved in peptide bond synthesis. Stimulates efficient translation and peptide-bond synthesis on native or reconstituted 70S ribosomes in vitro. Probably functions indirectly by altering the affinity of the ribosome for aminoacyl-tRNA, thus increasing their reactivity as acceptors for peptidyl transferase. The sequence is that of Elongation factor P from Sinorhizobium fredii (strain NBRC 101917 / NGR234).